Here is a 309-residue protein sequence, read N- to C-terminus: Short-chain dehydrogenase/reductase ARMGADRAFT_1048226 (309 aa).

Positions 64, 86, 113, and 145 each coordinate NADP(+). Ser167 acts as the Proton donor in catalysis. Positions 196 and 200 each coordinate NADP(+). Residue Tyr196 is the Proton acceptor of the active site. Lys200 serves as the catalytic Lowers pKa of active site Tyr.

Belongs to the short-chain dehydrogenases/reductases (SDR) family.

It functions in the pathway secondary metabolite biosynthesis. Short-chain dehydrogenase/reductase, part of the gene cluster that mediates the biosynthesis of melleolides, a range of antifungal and phytotoxic polyketide derivatives composed of an orsellinic acid (OA) moiety esterified to various sesquiterpene alcohols. The first step in melleolides biosynthesis is performed by the delta(6)-protoilludene synthase PRO1 which catalyzes the cyclization of farnesyl diphosphate to protoilludene. The orsellinic acid synthase armB produces OA by condensing acetyl-CoA with 3 malonyl-CoA units in a three-round chain elongation reaction folowed by a C2-C7 ring closure. ArmB further catalyzes the trans-esterification of OA to the various sesquiterpene alcohols resulting from the hydroxylation of protoilludene. The melleolides cluster also includes 5 cytochrome P450 monooxygenases, 4 NAD(+)-dependent oxidoreductases, one flavin-dependent oxidoreductase, and one O-methyltransferase. The cytochrome P450 monooxygenases may be involved in protoilludene hydroxylation to elaborate melleolides with multiple alcohol groups, such as melleolide D, which carries alcohol functionalities at C-4, C-5, C-10, and C-13. The role of the NAD(+)-dependent enzymes remains unknown. Numerous melleolides, including arnamial, show 5'-O-methylation of the aromatic moiety which may be catalyzed by the methyltransferase encoded in the cluster. The flavin-dependent oxidoreductase might represent the dehydrogenase yielding the aldehyde in position 1 of arnamial and other melleolides. Finally, several halogenase localized outside of the cluster, are able to catalyze the transfer of a single chlorine atom to the melleolide backbone, resulting in a 6'-chloromelleolide product. This is Short-chain dehydrogenase/reductase ARMGADRAFT_1048226 from Armillaria gallica (Bulbous honey fungus).